We begin with the raw amino-acid sequence, 190 residues long: Segregation and condensation protein B (190 aa).

It belongs to the ScpB family. As to quaternary structure, homodimer. Homodimerization may be required to stabilize the binding of ScpA to the Smc head domains. Component of a cohesin-like complex composed of ScpA, ScpB and the Smc homodimer, in which ScpA and ScpB bind to the head domain of Smc. The presence of the three proteins is required for the association of the complex with DNA.

It localises to the cytoplasm. Its function is as follows. Participates in chromosomal partition during cell division. May act via the formation of a condensin-like complex containing Smc and ScpA that pull DNA away from mid-cell into both cell halves. The chain is Segregation and condensation protein B from Bacillus cereus (strain ATCC 10987 / NRS 248).